The following is a 715-amino-acid chain: Elongation factor G (715 aa).

Residues 12–309 enclose the tr-type G domain; that stretch reads RRVRNIGIMA…GVIDYLPSPL (298 aa). Residues 21 to 28, 108 to 112, and 162 to 165 each bind GTP; these read AHIDAGKT, DTPGH, and NKMD.

Belongs to the TRAFAC class translation factor GTPase superfamily. Classic translation factor GTPase family. EF-G/EF-2 subfamily.

The protein localises to the cytoplasm. In terms of biological role, catalyzes the GTP-dependent ribosomal translocation step during translation elongation. During this step, the ribosome changes from the pre-translocational (PRE) to the post-translocational (POST) state as the newly formed A-site-bound peptidyl-tRNA and P-site-bound deacylated tRNA move to the P and E sites, respectively. Catalyzes the coordinated movement of the two tRNA molecules, the mRNA and conformational changes in the ribosome. The polypeptide is Elongation factor G (Rubrobacter xylanophilus (strain DSM 9941 / JCM 11954 / NBRC 16129 / PRD-1)).